The primary structure comprises 305 residues: MDFSPVGEESLGVRSMCFYVETRDVRILFDAGVSLAPRRFGLPPHPRELERARAVRAEILRLAEAADVVTVSHYHRDHFTPWYPSVYMATDGEMYKRVYRGKKVLMKSPQDLNWSQRRRHYGLSKALQETGAEAVYADGGEWTFGETRVAASPPLWHGPAGSKTGRVVGFAVSDGEERLVFLPDVEGPLEPEPIAFAREARPTVVVVGGPPTYLGWDLEKAIKNLAELVELRPHTLVLAHHLLRDMQWREKVAPLFELAERRGVEVATYASLAGRPEELLEARRRELYAKEPAAAVETGEGEEED.

The protein belongs to the UPF0282 family.

The sequence is that of UPF0282 protein Pisl_0021 from Pyrobaculum islandicum (strain DSM 4184 / JCM 9189 / GEO3).